Reading from the N-terminus, the 118-residue chain is Large ribosomal subunit protein bL19 (118 aa).

Belongs to the bacterial ribosomal protein bL19 family.

This protein is located at the 30S-50S ribosomal subunit interface and may play a role in the structure and function of the aminoacyl-tRNA binding site. This Salinispora tropica (strain ATCC BAA-916 / DSM 44818 / JCM 13857 / NBRC 105044 / CNB-440) protein is Large ribosomal subunit protein bL19.